The primary structure comprises 204 residues: FlaA locus 22.9 kDa protein (204 aa).

The tract at residues 115-140 (EKTAEDQKKSSEDHTEGSADSKASSE) is disordered.

The chain is FlaA locus 22.9 kDa protein (ylxF) from Bacillus subtilis (strain 168).